Consider the following 2784-residue polypeptide: MAQPETLHQVLAQPADASRVKQLQTVHEAITASLSGQQPGARVGLETLVLCAEAALKVGSLDVAHDCLERYFLEQRRYTVGMAPVELRDQYLCRAHFARGLLVSERSKGLKGKALIDGTLEGVKHVMAGLEVAAANQPRYQFLVYNASVHHWRVVAPLHRDGLRHHLLASTDRVVQALDKVPGHEEWKVRIYTALALCQSDAATVAAAQAEAAGGKAPAKGGGGAAATHDDAAKTLQRAYDTAAAAKLTELQKDVARLQVHLATLAAAAGGKGAKAGGGGAAGGAGKPGAKGAAAALDEEGALRLIQAVLTGRPDRAVAEQQLREAVAKVDPKGPDGPVKGALLRPVSRAAWAAALAGLPELAERWASRAAASSDSGPRTWSDMTRVQLALQALGPAGDTSLAPVVVAAHVKALEQLEDVLTTFTKLADVEGIHAAARLAWNAGLLLLQPGLRKHVKRAFNAAARALAVAASPLTRLRAALHLEAGKCDAAEEALIKAGQEVGKALALDYLPPPAEAAAVPWLARPLDRWAAPLARALALRTSAEPANPEEEAVSLIERSKESRNPAIKSDLLARAREKLRDLPHPPPPAPTDPPGPDRDAAHAAARRRTAVWAELMRSAASSRMDEHVLAAAPHALCVSWDPAVDREMVLLQAQLAHYEAEAAISALRRRRADISPPTRPSPPEVDGEGVRQPPATTEQLQELVVQASVRSMRGAMSVNEPWLTLNNAVQLYNAALPLMQQHRYADLYRWLRPVAEALVALPVADSDGPLAVAVAEALGRAAEHRLLLATLRAKAARDAGQELEDDDDEDSLDEDGNPPPAGDAGPHFNRRSPAYKPLPDARVAASGLDPRGFPALARLLASIGTVTAVAEAALERAGGASTQGLLEMYARLQQYRGVSSGLPAGAAAASAATSRVVSAIEALSSANRVNEEKQPAGAGAEKGGGDKGRKPHGSLAADAAAAIALLRALPGGPPLELWAKMARAVADAGVWPAALECSAAALAALPGAGRDLDVLRLEAPSDVPEMTPAGWFWASVALSVRAAALLTLVDLPSQGAATALTVRREALLHAAQAARCAAFVNKADLCESACRVAWNAALPFTTKPLLRAALIRPLGTAVEALNRVGPADKGFQVRMNCLYVESLAAAKRWGDAVAACDAASRAVKSRSLHRPLMGWKAACLAMLGKNVNAEMTKVKEHPPEAQAYAWSVLSHHSAARYDQIAAHKAAGEAVEHHGWLKAVALAGYAEWLLSSSDDKEAAEDALLAAADALLEFDTGDLDGDGTDDEDDATKAKPRSRSGGGSSSGRAGGGFRRVLSRSYSRGGGGSADGARPSEGGEGAGPAAPDPNRVPEELGSTHLERLARLYVMACQAAPNATDHTDYMLAAHHNFMRLLTQALHSAAHTAFVAARDSYNGEVAAAALEGRDPPPETPLPKPYAVVPDTLIGWGTWQITPELLETLASDAATGAVTALSRELLPQAELTLAYLELLQACLRARGYHCHCLGLAQLQRVLARMVLRDEGMYVATSLGLVAALDELGLSREAGEVEAALGDVACIGPQEEAQAAEQAALADLVLAAAGKLEAARPRSALAVGRLSFLAGGVRRANNAANAAAAAPLPPVAAASQAAAAADAAAAASFTAAGGGRGGRESPSPHDDGIHYIGGPAPGDSHGQLPEWMEDAARELGNVDLAGSAGGLLSHVSGQLLLRPFTLHDVWLKKGDYLLRRGHYAAARQLLSRARAHAADCGNREAEARCLLALSRTELAAHNPVEAVALVQAAQRFGGDIDFWAELLVQYVDCRLAGAHSTTSDAREALQGGIAMFLALARDDRAAEKPASAAGAVLRVRLARLLLTDMEMLRGQGVSTWRKSYDGAVTLVNQAIMALAAREAGLPHIEALLVQAELMLAEPTHIKDLRPRLKKVEKVLLAAEEMAVRFHAEATPRDLAPRCVTPTARLLACVRCRLAEVQLAAAEERERLAGADREKARPKFPHMRGKRDVQVVIDFIDEAGGAPPAPPGLLPEDSALALATGAAALVAAAPRDRARALLIAGRCLAFKFMMAAPEALDPLRPFVPPPKPPGAPKRPPAGAEEEEDEEGPDTAAADAAAEAAEAAATPEGAAALRLQAQAAAMLSSALASATSVQDWALGEQCALALSTLYGQLSPGLACRSLAAAQACRAAAGGQALLRAAAPAQQPEVLALAQRDKLSEVLPAPQDNVHYSALRRMLSGLKGAAARLDAAAAPPVEQQLAALPQDLRVLMLYLSPDGGRLYAAALNIPDATAEPTPPLNAEKSKKKTDASAPAAAGPRLSLLHVVEVDPAAVEALVAECRAYRRGVERTLREAIASAAAKGVGVPPEDDRPDSPSKKGKKPGSATKRPGSKQGPKSGPGAAAAAAAAAAAAGEAGKVQVFDSRLNEEWSGILEQFEEWLAPLAPWLEAAVPALPLPPPGSPDGKKEKKDKKEAAGPTKHKVALLLDPALQSLPWEAARHLATTCSEVSRSPSLQALAACHTLPRADSAAASEHAAAAAAAPAALPPLDLGRLTVIVDPRHECSTAQQARGPYTAQLIPALSAPELTQVLPAASWWGPGGPGGGLEGVPGRAPSPDTYASLLAGQATGGPCTGLLFLGVGRFAAHVPPAVLASAPLGGCEAALLFDRCNTDDAYWAQLYRDNRKSAEQRRLESPGRVATLLLAKGVRTVLVMSAAAPPAAVVKLMHGVMAGLAAGRVLGEVVYSLLTGGGGSGGAGAGVLDEFELAHLRACLQVWGAPGLLGAVLTQGNKAAKGAKK.

One copy of the TPR 1 repeat lies at 129–162; that stretch reads GLEVAAANQPRYQFLVYNASVHHWRVVAPLHRDG. A coiled-coil region spans residues 242 to 268; sequence TAAAAKLTELQKDVARLQVHLATLAAA. The stretch at 401–434 is one TPR 2 repeat; the sequence is SLAPVVVAAHVKALEQLEDVLTTFTKLADVEGIH. 2 disordered regions span residues 543–562 and 581–607; these read SAEP…RSKE and RDLP…AAAR. Over residues 585 to 595 the composition is skewed to pro residues; it reads HPPPPAPTDPP. A coiled-coil region spans residues 644-665; it reads AVDREMVLLQAQLAHYEAEAAI. Residues 670 to 697 are disordered; that stretch reads RRRADISPPTRPSPPEVDGEGVRQPPAT. Residues 708 to 743 form a TPR 3 repeat; that stretch reads ASVRSMRGAMSVNEPWLTLNNAVQLYNAALPLMQQH. Disordered stretches follow at residues 799–837 and 929–954; these read DAGQ…PAYK and RVNE…KPHG. The span at 802–817 shows a compositional bias: acidic residues; the sequence is QELEDDDDEDSLDEDG. The stretch at 976 to 1009 is one TPR 4 repeat; that stretch reads LELWAKMARAVADAGVWPAALECSAAALAALPGA. The span at 1275–1288 shows a compositional bias: acidic residues; that stretch reads TGDLDGDGTDDEDD. Disordered stretches follow at residues 1275–1351 and 1640–1673; these read TGDL…RVPE and AAGG…HGQL. The span at 1298–1311 shows a compositional bias: gly residues; the sequence is SGGGSSSGRAGGGF. Residues 1646–1658 show a composition bias toward basic and acidic residues; sequence GGRESPSPHDDGI. TPR repeat units lie at residues 1712–1745 and 1854–1886; these read HDVW…AADC and MEML…LAAR. Residues 1961-1984 are a coiled coil; the sequence is RLAEVQLAAAEERERLAGADREKA. Disordered stretches follow at residues 2068-2112, 2278-2303, 2346-2389, and 2441-2465; these read RPFV…EAAA, ATAE…PAAA, AAKG…PGAA, and LPLP…AGPT. The span at 2069–2083 shows a compositional bias: pro residues; that stretch reads PFVPPPKPPGAPKRP. Residues 2087–2096 are compositionally biased toward acidic residues; the sequence is AEEEEDEEGP. The segment covering 2097–2112 has biased composition (low complexity); the sequence is DTAAADAAAEAAEAAA. Over residues 2378–2389 the composition is skewed to low complexity; it reads SKQGPKSGPGAA. Residues 2450–2461 are compositionally biased toward basic and acidic residues; the sequence is DGKKEKKDKKEA. Residues 2613–2646 form a TPR 7 repeat; sequence ATGGPCTGLLFLGVGRFAAHVPPAVLASAPLGGC.

This sequence belongs to the CFAP46 family. In terms of assembly, part of the PDCP1 complex composed of CFAP46, CFAP54, CFAP74 and CFAP221; the PDCP1 complex binds calmodulin.

The protein resides in the cytoplasm. It is found in the cytoskeleton. Its subcellular location is the cilium axoneme. Its function is as follows. As part of the central apparatus of the cilium axoneme plays a role in cilium movement and thereby cell motility. This is Cilia- and flagella-associated protein 46 from Chlamydomonas reinhardtii (Chlamydomonas smithii).